The following is a 148-amino-acid chain: D-aminoacyl-tRNA deacylase (148 aa).

Residues 136 to 137 (GP) carry the Gly-cisPro motif, important for rejection of L-amino acids motif.

The protein belongs to the DTD family. Homodimer.

The protein resides in the cytoplasm. It carries out the reaction glycyl-tRNA(Ala) + H2O = tRNA(Ala) + glycine + H(+). The enzyme catalyses a D-aminoacyl-tRNA + H2O = a tRNA + a D-alpha-amino acid + H(+). Its function is as follows. An aminoacyl-tRNA editing enzyme that deacylates mischarged D-aminoacyl-tRNAs. Also deacylates mischarged glycyl-tRNA(Ala), protecting cells against glycine mischarging by AlaRS. Acts via tRNA-based rather than protein-based catalysis; rejects L-amino acids rather than detecting D-amino acids in the active site. By recycling D-aminoacyl-tRNA to D-amino acids and free tRNA molecules, this enzyme counteracts the toxicity associated with the formation of D-aminoacyl-tRNA entities in vivo and helps enforce protein L-homochirality. The protein is D-aminoacyl-tRNA deacylase of Kosmotoga olearia (strain ATCC BAA-1733 / DSM 21960 / TBF 19.5.1).